The primary structure comprises 232 residues: 6-phosphogluconolactonase (232 aa).

This sequence belongs to the glucosamine/galactosamine-6-phosphate isomerase family. 6-phosphogluconolactonase subfamily.

The catalysed reaction is 6-phospho-D-glucono-1,5-lactone + H2O = 6-phospho-D-gluconate + H(+). The protein operates within carbohydrate degradation; pentose phosphate pathway; D-ribulose 5-phosphate from D-glucose 6-phosphate (oxidative stage): step 2/3. Hydrolysis of 6-phosphogluconolactone to 6-phosphogluconate. The chain is 6-phosphogluconolactonase (pgl) from Aggregatibacter actinomycetemcomitans (Actinobacillus actinomycetemcomitans).